The following is a 1007-amino-acid chain: Kinesin-like protein KIN-7D, chloroplastic (1007 aa).

A chloroplast-targeting transit peptide spans 1–53; it reads MATRPASRQRRASSAAAAVAVVRSSPQPQQQQQQQLPIPQSGSPTSTTTTTTS. Positions 1–55 are enriched in low complexity; that stretch reads MATRPASRQRRASSAAAAVAVVRSSPQPQQQQQQQLPIPQSGSPTSTTTTTTSSS. The disordered stretch occupies residues 1–79; that stretch reads MATRPASRQR…LFAGLDEDPA (79 aa). Residues 83-402 enclose the Kinesin motor domain; it reads NVTVTVRFRP…LKFAHRAKRI (320 aa). Residue 163-170 coordinates ATP; the sequence is GVTSSGKT. A coiled-coil region spans residues 403-495; the sequence is EVQASQNKII…QRLTKLILVS (93 aa). The disordered stretch occupies residues 579–607; it reads ILTSSEGDKSSLTKSTAPSTPIGESVNFP. Coiled-coil stretches lie at residues 687-716, 754-791, and 836-907; these read NNEKIQMEMKKVNDEIKGKKHQIASLERQI, AADNRVIQDQLNEKTTECMELQEEVAHLKEQLYQTLQA, and SVEI…SVRS. The segment at 901-941 is disordered; it reads ELASVRSPTPRRANSGLRGTRRDSISRRHEPAPRRDNNAGY. Basic and acidic residues predominate over residues 920-941; sequence TRRDSISRRHEPAPRRDNNAGY. A coiled-coil region spans residues 942-982; that stretch reads EREKALEAVLMEKEQKEAELQRRIEESKQKEAFLESELANM.

The protein belongs to the TRAFAC class myosin-kinesin ATPase superfamily. Kinesin family. KIN-7 subfamily. Binds microtubules. Homodimer. It depends on Mg(2+) as a cofactor.

The protein localises to the plastid. The protein resides in the chloroplast. Probable minus end-directed motor protein with a microtubule-enhanced ATPase activity. Binds ATP/ADP in vitro. Retains total enzymatic activity even after the removal of the ADP bound in the active site. The protein is Kinesin-like protein KIN-7D, chloroplastic of Oryza sativa subsp. japonica (Rice).